The following is a 272-amino-acid chain: Dermonecrotic toxin StSicTox-betaIC1 (272 aa).

Residue H5 is part of the active site. E25 and D27 together coordinate Mg(2+). H41 acts as the Nucleophile in catalysis. Cystine bridges form between C45–C51 and C47–C191. Residue D85 participates in Mg(2+) binding.

Belongs to the arthropod phospholipase D family. Class II subfamily. Class IIb sub-subfamily. The cofactor is Mg(2+). Expressed by the venom gland.

The protein resides in the secreted. The enzyme catalyses an N-(acyl)-sphingosylphosphocholine = an N-(acyl)-sphingosyl-1,3-cyclic phosphate + choline. It catalyses the reaction N-hexanoyl-sphing-4-enine-1-phosphocholine = N-(hexanoyl)-sphing-4-enine-1,3-cyclic phosphate + choline. The catalysed reaction is an N-(acyl)-sphingosylphosphoethanolamine = an N-(acyl)-sphingosyl-1,3-cyclic phosphate + ethanolamine. It carries out the reaction N-dodecanoyl-heptadecasphing-4-enine-1-phosphoethanolamine = N-dodecanoyl-heptadecasphing-4-enine-1,3-cyclic phosphate + ethanolamine. The enzyme catalyses a 1-acyl-sn-glycero-3-phosphoethanolamine = a 1-acyl-sn-glycero-2,3-cyclic phosphate + ethanolamine. It catalyses the reaction 1-tetradecanoyl-sn-glycero-3-phosphoethanolamine = 1-tetradecanoyl-sn-glycero-2,3-cyclic phosphate + ethanolamine. Its function is as follows. Dermonecrotic toxins cleave the phosphodiester linkage between the phosphate and headgroup of certain phospholipids (sphingolipid and lysolipid substrates), forming an alcohol (often choline) and a cyclic phosphate. This toxin acts on lysophosphatidylethanolamine (LPE) and ceramide phosphoethanolamine (CPE) with high activity. This toxin acts on sphingomyelin (SM) with very low activity and is not active on lysophosphatidylserine (LPS), lysophosphatidylcholine (LPC) and lysophosphatidylglycerol (LPG). It acts by transphosphatidylation, releasing exclusively cyclic phosphate as second products. It is not surprising that spider toxins have affinity for ethanolamine-containing sphingolipids since they are common in insect prey. Induces dermonecrosis, hemolysis, increased vascular permeability, edema, inflammatory response, and platelet aggregation. This chain is Dermonecrotic toxin StSicTox-betaIC1, found in Sicarius terrosus (Cave spider).